We begin with the raw amino-acid sequence, 327 residues long: D-alanine--D-alanine ligase (327 aa).

The ATP-grasp domain maps to 113–312; sequence KRLWMTHGLA…YEDFVMQVLA (200 aa). ATP is bound at residue 139–194; sequence VADLGLPLIVKPAREGSSIGLTKVIAADQMRAAFEKAAGLDADVIAETFIDGAELT. Aspartate 266, glutamate 279, and asparagine 281 together coordinate Mg(2+).

This sequence belongs to the D-alanine--D-alanine ligase family. Mg(2+) is required as a cofactor. The cofactor is Mn(2+).

It is found in the cytoplasm. It carries out the reaction 2 D-alanine + ATP = D-alanyl-D-alanine + ADP + phosphate + H(+). The protein operates within cell wall biogenesis; peptidoglycan biosynthesis. Cell wall formation. The protein is D-alanine--D-alanine ligase of Cupriavidus metallidurans (strain ATCC 43123 / DSM 2839 / NBRC 102507 / CH34) (Ralstonia metallidurans).